The primary structure comprises 418 residues: MSLSTVSNHIINPLGNVVYGNPSSPTSTSSSSSLTPTSTNEEMIKKEDSGTSEPSSPSTGECNGKKAGRRKIKIEFIDDKSRRHITFSKRKAGIMKKAYELSTLTGTQVLLLVASETGHVYTFATAKLQPLITRPEGKNLIQSCLNTPDNPNSPSMANQNSNNNSNLLQQQQQQQLQQQQQLQQQQQQQQQQQQQQQQQQQQQQAAQQAVQQQQQQQAAQQQAAQQQQLQLQQQQQQQQQQQQQQQQQQQQQQLQQLQQQQLLQQQQHQQIQQHQQQQQYINSNGYPETIYDIQDKDIERRLGKDNNNNNNNNNNNINNNNNNNNSNNNSGNNNSNNNNNNNNKNNSNNNSQYIQQQNLNIDLNYSNPNVYPIGNYFQQTVQSRYIQSSSSASSSPASPNQFNYSNHSMPLNNQFPPC.

4 disordered regions span residues 14–67, 144–170, 301–351, and 388–418; these read LGNV…GKKA, CLNTPDNPNSPSMANQNSNNNSNLLQQ, RLGK…NNNS, and SSSSASSSPASPNQFNYSNHSMPLNNQFPPC. Composition is skewed to low complexity over residues 22–39 and 51–61; these read PSSPTSTSSSSSLTPTST and TSEPSSPSTGE. In terms of domain architecture, MADS-box spans 67–127; it reads AGRRKIKIEF…GHVYTFATAK (61 aa). Composition is skewed to low complexity over residues 150–170, 306–351, and 388–399; these read NPNSPSMANQNSNNNSNLLQQ, NNNN…NNNS, and SSSSASSSPASP. A compositionally biased stretch (polar residues) spans 400–418; sequence NQFNYSNHSMPLNNQFPPC.

It is found in the nucleus. Functionally, required for proper slug migration, spore differentiation and stalk differentiation (under nonbuffered conditions). Could be involved in late events of spore maturation necessary for spore stability. This chain is Serum response factor homolog A (srfA), found in Dictyostelium discoideum (Social amoeba).